The sequence spans 284 residues: L-ribulose-5-phosphate 3-epimerase UlaE (284 aa).

This sequence belongs to the L-ribulose-5-phosphate 3-epimerase family.

It catalyses the reaction L-ribulose 5-phosphate = L-xylulose 5-phosphate. Its pathway is cofactor degradation; L-ascorbate degradation; D-xylulose 5-phosphate from L-ascorbate: step 3/4. Functionally, catalyzes the isomerization of L-xylulose-5-phosphate to L-ribulose-5-phosphate. Is involved in the anaerobic L-ascorbate utilization. The chain is L-ribulose-5-phosphate 3-epimerase UlaE from Salmonella choleraesuis (strain SC-B67).